We begin with the raw amino-acid sequence, 332 residues long: Fructose-1,6-bisphosphatase class 1 (332 aa).

Positions 89, 110, 112, and 113 each coordinate Mg(2+). Residues 113–116 (DGSS), Asn206, Tyr239, 257–259 (YLY), and Lys269 each bind substrate. Position 275 (Glu275) interacts with Mg(2+).

It belongs to the FBPase class 1 family. In terms of assembly, homotetramer. The cofactor is Mg(2+).

The protein resides in the cytoplasm. It carries out the reaction beta-D-fructose 1,6-bisphosphate + H2O = beta-D-fructose 6-phosphate + phosphate. Its pathway is carbohydrate biosynthesis; gluconeogenesis. This chain is Fructose-1,6-bisphosphatase class 1, found in Klebsiella pneumoniae (strain 342).